Consider the following 84-residue polypeptide: RNA-binding protein Hfq (84 aa).

Residues 11-71 (DTFLNHVRKN…ISTIMPGHPV (61 aa)) form the Sm domain.

This sequence belongs to the Hfq family. Homohexamer.

Its function is as follows. RNA chaperone that binds small regulatory RNA (sRNAs) and mRNAs to facilitate mRNA translational regulation in response to envelope stress, environmental stress and changes in metabolite concentrations. Also binds with high specificity to tRNAs. This Methylobacterium nodulans (strain LMG 21967 / CNCM I-2342 / ORS 2060) protein is RNA-binding protein Hfq.